The primary structure comprises 156 residues: Small ribosomal subunit protein uS7 (156 aa).

It belongs to the universal ribosomal protein uS7 family. Part of the 30S ribosomal subunit. Contacts proteins S9 and S11.

Functionally, one of the primary rRNA binding proteins, it binds directly to 16S rRNA where it nucleates assembly of the head domain of the 30S subunit. Is located at the subunit interface close to the decoding center, probably blocks exit of the E-site tRNA. This chain is Small ribosomal subunit protein uS7, found in Clostridium beijerinckii (strain ATCC 51743 / NCIMB 8052) (Clostridium acetobutylicum).